A 255-amino-acid chain; its full sequence is tRNA pseudouridine synthase A (255 aa).

Asp-43 serves as the catalytic Nucleophile. Tyr-94 contacts substrate.

The protein belongs to the tRNA pseudouridine synthase TruA family.

The catalysed reaction is uridine(38/39/40) in tRNA = pseudouridine(38/39/40) in tRNA. Functionally, formation of pseudouridine at positions 38, 39 and 40 in the anticodon stem and loop of transfer RNAs. This Pyrobaculum islandicum (strain DSM 4184 / JCM 9189 / GEO3) protein is tRNA pseudouridine synthase A.